Here is a 364-residue protein sequence, read N- to C-terminus: Peptide chain release factor 1 (364 aa).

Gln238 is modified (N5-methylglutamine). Positions 286-297 (DEKRQAEEDSTR) are enriched in basic and acidic residues. The tract at residues 286–315 (DEKRQAEEDSTRRNLVGSGDRSERIRTYNY) is disordered.

This sequence belongs to the prokaryotic/mitochondrial release factor family. Methylated by PrmC. Methylation increases the termination efficiency of RF1.

It is found in the cytoplasm. Peptide chain release factor 1 directs the termination of translation in response to the peptide chain termination codons UAG and UAA. This is Peptide chain release factor 1 from Idiomarina loihiensis (strain ATCC BAA-735 / DSM 15497 / L2-TR).